The following is a 728-amino-acid chain: 1,4-alpha-glucan branching enzyme GlgB (728 aa).

Asp-405 functions as the Nucleophile in the catalytic mechanism. Catalysis depends on Glu-458, which acts as the Proton donor.

This sequence belongs to the glycosyl hydrolase 13 family. GlgB subfamily. In terms of assembly, monomer.

It carries out the reaction Transfers a segment of a (1-&gt;4)-alpha-D-glucan chain to a primary hydroxy group in a similar glucan chain.. The protein operates within glycan biosynthesis; glycogen biosynthesis. Its function is as follows. Catalyzes the formation of the alpha-1,6-glucosidic linkages in glycogen by scission of a 1,4-alpha-linked oligosaccharide from growing alpha-1,4-glucan chains and the subsequent attachment of the oligosaccharide to the alpha-1,6 position. This Escherichia coli O1:K1 / APEC protein is 1,4-alpha-glucan branching enzyme GlgB.